The primary structure comprises 798 residues: Galactinol--sucrose galactosyltransferase (798 aa).

The protein belongs to the glycosyl hydrolases 36 family.

The enzyme catalyses alpha-D-galactosyl-(1-&gt;3)-1D-myo-inositol + sucrose = raffinose + myo-inositol. With respect to regulation, inhibited by 1-deoxygalactonojirimycin. Not inhibited by stachyose. Strong inhibition of the hydrolytic activity by sucrose. Its function is as follows. Transglycosidase operating by a ping-pong reaction mechanism. Involved in the synthesis of raffinose, a major soluble carbohydrate in seeds, roots and tubers. Able to utilize D-ononitol and D-pinitol as acceptors. May also act as a glycoside hydrolase. The protein is Galactinol--sucrose galactosyltransferase (RFS) of Pisum sativum (Garden pea).